A 460-amino-acid polypeptide reads, in one-letter code: Phosphomethylpyrimidine synthase (460 aa).

Residues Asn-80, Met-109, Tyr-138, His-174, 194-196 (SRG), 235-238 (DSLR), and Glu-274 each bind substrate. A Zn(2+)-binding site is contributed by His-278. Tyr-301 is a substrate binding site. His-342 is a Zn(2+) binding site. [4Fe-4S] cluster-binding residues include Cys-422, Cys-425, and Cys-430.

The protein belongs to the ThiC family. As to quaternary structure, homodimer. [4Fe-4S] cluster serves as cofactor.

The enzyme catalyses 5-amino-1-(5-phospho-beta-D-ribosyl)imidazole + S-adenosyl-L-methionine = 4-amino-2-methyl-5-(phosphooxymethyl)pyrimidine + CO + 5'-deoxyadenosine + formate + L-methionine + 3 H(+). Its pathway is cofactor biosynthesis; thiamine diphosphate biosynthesis. Catalyzes the synthesis of the hydroxymethylpyrimidine phosphate (HMP-P) moiety of thiamine from aminoimidazole ribotide (AIR) in a radical S-adenosyl-L-methionine (SAM)-dependent reaction. This Sulfurimonas denitrificans (strain ATCC 33889 / DSM 1251) (Thiomicrospira denitrificans (strain ATCC 33889 / DSM 1251)) protein is Phosphomethylpyrimidine synthase.